The chain runs to 54 residues: Putative neurotoxin-I (54 aa).

Intrachain disulfides connect Cys-20/Cys-42, Cys-28/Cys-51, and Cys-32/Cys-53.

Expressed by the venom gland.

It is found in the secreted. This is Putative neurotoxin-I from Lychas mucronatus (Chinese swimming scorpion).